The sequence spans 106 residues: MYQTSPLSLFYFQVLVPKFLECFLCFPYHKISLVALLSFFYCQLQTNMIILLSQIKRFLYRQIMIALKIKAKKFWFIFKYFNVSCDARLFNELFYIFQTYVSVDSK.

Residues 1–6 (MYQTSP) lie on the Cytoplasmic side of the membrane. The chain crosses the membrane as a helical span at residues 7 to 27 (LSLFYFQVLVPKFLECFLCFP). Topologically, residues 28-32 (YHKIS) are extracellular. The helical transmembrane segment at 33-53 (LVALLSFFYCQLQTNMIILLS) threads the bilayer. The Cytoplasmic segment spans residues 54–73 (QIKRFLYRQIMIALKIKAKK). A helical transmembrane segment spans residues 74–94 (FWFIFKYFNVSCDARLFNELF). Over 95 to 106 (YIFQTYVSVDSK) the chain is Extracellular.

The protein localises to the membrane. This is an uncharacterized protein from Saccharomyces cerevisiae (strain ATCC 204508 / S288c) (Baker's yeast).